Consider the following 942-residue polypeptide: Chitin synthase 4 (942 aa).

Residues 1–124 form a disordered region; the sequence is MPPRYPFGGG…FDEHDGDVPL (124 aa). Positions 14–26 are enriched in basic and acidic residues; that stretch reads DEAHHQPLERRTT. Polar residues predominate over residues 27 to 36; sequence AEAQGNSFTH. Residue Asn-604 is glycosylated (N-linked (GlcNAc...) asparagine). A run of 7 helical transmembrane segments spans residues 641-661, 674-694, 709-729, 755-775, 783-803, 885-905, and 909-929; these read TIQL…FFIL, VPNL…FLLS, AMVV…YLAV, IVIS…MFLE, IVQY…YAFA, VLCW…ISSI, and TIYM…RMMG.

Belongs to the chitin synthase family. Class I subfamily.

The protein localises to the cell membrane. It is found in the cytoplasmic vesicle membrane. The catalysed reaction is [(1-&gt;4)-N-acetyl-beta-D-glucosaminyl](n) + UDP-N-acetyl-alpha-D-glucosamine = [(1-&gt;4)-N-acetyl-beta-D-glucosaminyl](n+1) + UDP + H(+). Functionally, polymerizes chitin, a structural polymer of the cell wall and septum, by transferring the sugar moiety of UDP-GlcNAc to the non-reducing end of the growing chitin polymer. This Mycosarcoma maydis (Corn smut fungus) protein is Chitin synthase 4.